Consider the following 719-residue polypeptide: Polyribonucleotide nucleotidyltransferase (719 aa).

Residues Asp490 and Asp496 each contribute to the Mg(2+) site. The region spanning 557–619 (PKIEIIIIPK…KSIDAALTRI (63 aa)) is the KH domain. In terms of domain architecture, S1 motif spans 629–699 (GEIYEGKIRS…KTGKFKLSHK (71 aa)).

It belongs to the polyribonucleotide nucleotidyltransferase family. It depends on Mg(2+) as a cofactor.

It is found in the cytoplasm. The catalysed reaction is RNA(n+1) + phosphate = RNA(n) + a ribonucleoside 5'-diphosphate. Involved in mRNA degradation. Catalyzes the phosphorolysis of single-stranded polyribonucleotides processively in the 3'- to 5'-direction. The sequence is that of Polyribonucleotide nucleotidyltransferase from Azobacteroides pseudotrichonymphae genomovar. CFP2.